A 3013-amino-acid polypeptide reads, in one-letter code: Genome polyprotein (3013 aa).

At S2 the chain carries N-acetylserine; by host. The segment at 2 to 23 (STLPKPQKRNQRNTNRRPQDVK) is interaction with STAT1. The tract at residues 2–58 (STLPKPQKRNQRNTNRRPQDVKFPGGGQIVGGVYLLPRRGPRLGVRATRKTSERSQP) is interaction with EIF2AK2/PKR. Positions 2–59 (STLPKPQKRNQRNTNRRPQDVKFPGGGQIVGGVYLLPRRGPRLGVRATRKTSERSQPR) are interaction with DDX3X. A disordered region spans residues 2-75 (STLPKPQKRN…PKARRQTGRT (74 aa)). Residues 2-168 (STLPKPQKRN…EDGINYATGN (167 aa)) lie on the Cytoplasmic side of the membrane. Short sequence motifs (nuclear localization signal) lie at residues 5–13 (PKPQKRNQR) and 38–43 (PRRGPR). A compositionally biased stretch (basic residues) spans 7 to 16 (PQKRNQRNTN). Residues 32–47 (GGVYLLPRRGPRLGVR) are compositionally biased toward low complexity. A Phosphoserine; by host modification is found at S53. Short sequence motifs (nuclear localization signal) lie at residues 58 to 64 (PRGRRQP) and 66 to 71 (PKARRQ). Over residues 58-72 (PRGRRQPIPKARRQT) the composition is skewed to basic residues. A phosphoserine; by host mark is found at S99 and S116. Residues 112 to 152 (PRRRSRNLGKVIDTLTCGFADLMGYIPVVGAPLGGVAAALA) are important for endoplasmic reticulum and mitochondrial localization. Residues 122-173 (VIDTLTCGFADLMGYIPVVGAPLGGVAAALAHGVRAVEDGINYATGNLPGCS) are interaction with APOA2. Positions 164 to 167 (YATG) are important for lipid droplets localization. The chain crosses the membrane as a helical span at residues 169–189 (LPGCSFSIFLLALLSCLTTPA). The propeptide at 178-191 (LLALLSCLTTPASA) is ER anchor for the core protein, removed in mature form by host signal peptidase. Residues 190–358 (SAVHYANKSG…TGGHWGILAG (169 aa)) are Lumenal-facing. Residues N196, N209, N234, and N250 are each glycosylated (N-linked (GlcNAc...) asparagine; by host). Residues 265-296 (MVGAAAFCSAMYVGDLCGGIFLVGQLFSFNPR) are important for fusion. N305 is a glycosylation site (N-linked (GlcNAc...) asparagine; by host). Residues 359–379 (ILYYSMVANWAKVLCILFLFA) form a helical membrane-spanning segment. The Lumenal segment spans residues 380-723 (GVDATTRTTG…WEYVVLAFLL (344 aa)). Positions 385–412 (TRTTGAQAARATLGFTGLFQTGAKQNIH) are HVR1. Residues N417, N423, and N430 are each glycosylated (N-linked (GlcNAc...) (high mannose) asparagine; by host). Cystine bridges form between C429–C553, C452–C459, C487–C495, and C504–C509. Residue N448 is glycosylated (N-linked (GlcNAc...) asparagine; by host). Residues 475 to 479 (ANVSG) are HVR2. N-linked (GlcNAc...) asparagine; by host glycosylation is present at N476. Residues 481–494 (SEDRPYCWHYAPRP) form a CD81-binding 1 region. The N-linked (GlcNAc...) asparagine; by host glycan is linked to N533. Residues 545–552 (PPAGAWYG) form a CD81-binding 2 region. N557 is a glycosylation site (N-linked (GlcNAc...) asparagine; by host). 4 disulfides stabilise this stretch: C565–C570, C579–C583, C595–C618, and C605–C642. N-linked (GlcNAc...) (high mannose) asparagine; by host glycans are attached at residues N621 and N643. A disulfide bridge connects residues C650 and C675. The tract at residues 658-669 (IEMSPLLFSTTE) is PKR/eIF2-alpha phosphorylation homology domain (PePHD). The helical transmembrane segment at 724–744 (LADARICACLWMVLLISQVEA) threads the bilayer. The Lumenal portion of the chain corresponds to 745 to 755 (ALENLIVLNAA). Residues 756–776 (SAASSQGWIYCLVFICCAWYI) form a helical membrane-spanning segment. The Cytoplasmic segment spans residues 777 to 780 (KGRV). The helical transmembrane segment at 781-801 (VPGATYAILHLWPLLLLVLAL) threads the bilayer. Over 802 to 811 (PQRAYAQDRE) the chain is Lumenal. Residues 812-832 (QGASIGVVVIAAITIFTLTPA) form a helical membrane-spanning segment. Topologically, residues 833–879 (YKTMLVHFLWWNQYFIARSEALIQQWVPSLRVRGGRDAVILLTCLLH) are cytoplasmic. The helical transmembrane segment at 880-900 (PSLGFDITKMLLALLGPLYLL) threads the bilayer. The Lumenal portion of the chain corresponds to 901-926 (QVSLLRVPYYVRAHALLRVCILVRRV). The Peptidase C18 domain maps to 901-1024 (QVSLLRVPYY…DMKSMGWRLL (124 aa)). Residues 902–1204 (VSLLRVPYYV…PVENMETTMR (303 aa)) are protease NS2-3. The S-palmitoyl cysteine; by host moiety is linked to residue C920. The helical transmembrane segment at 927 to 947 (AGGKYIQAALLKLGAWTGTYI) threads the bilayer. An interaction with host SCPS1 region spans residues 927 to 947 (AGGKYIQAALLKLGAWTGTYI). Topologically, residues 948–1655 (YDHLAPLSTW…CMAADLEVIT (708 aa)) are cytoplasmic. Active-site for protease NS2 activity; shared with dimeric partner residues include H950, E970, and C991. Positions 1025-1206 (APITAYCQQT…ENMETTMRSP (182 aa)) constitute a Peptidase S29 domain. Catalysis depends on charge relay system; for serine protease NS3 activity residues H1081 and D1105. C1121 and C1123 together coordinate Zn(2+). Catalysis depends on S1163, which acts as the Charge relay system; for serine protease NS3 activity. Zn(2+)-binding residues include C1169 and H1173. The Helicase ATP-binding domain maps to 1215–1367 (PAVPQTYQVG…PNITETALPS (153 aa)). 1228 to 1235 (APTGSGKS) serves as a coordination point for ATP. Mg(2+) contacts are provided by S1235 and E1315. A DECH box motif is present at residues 1314 to 1317 (DECH). The 163-residue stretch at 1374 to 1536 (YGKAIPLECI…ELTPSETTVR (163 aa)) folds into the Helicase C-terminal domain. Residues 1484–1496 (QRRGRTGRGKPGV) are RNA-binding. A helical membrane pass occupies residues 1656–1676 (STWVLAGGIVAALAAYCLTVG). The NS3-binding stretch occupies residues 1677-1688 (SVVICGRIVTSG). The Cytoplasmic segment spans residues 1677-1803 (SVVICGRIVT…ALTSPLSTST (127 aa)). A helical membrane pass occupies residues 1804-1824 (TLLLNILGGWVASQLAPPTAS). The Lumenal segment spans residues 1825-1826 (TA). The chain crosses the membrane as a helical span at residues 1827 to 1847 (FVVSGLAGAAVGSIGLGKVII). Residue D1848 is a topological domain, cytoplasmic. Residues 1849-1869 (ILAGYGAGVSGALVAFKIMSG) traverse the membrane as a helical segment. Residues 1870–1879 (EAPAVEDMVN) lie on the Lumenal side of the membrane. A helical transmembrane segment spans residues 1880–1900 (LLPALLSPGALVVGVVCAAVL). The Cytoplasmic segment spans residues 1901-1970 (RRHVGPSEGA…WISGDWSAPC (70 aa)). The S-palmitoyl cysteine; by host moiety is linked to residue C1970. Residues 1971-2000 (SCSWLKDVWDWVCTVLSDFKTWLRAKLVPT) lie within the membrane without spanning it. Over 2001–2992 (LPGIPFISCQ…FHSVSRARPR (992 aa)) the chain is Cytoplasmic. Zn(2+) is bound by residues C2009, C2027, C2029, and C2050. An FKBP8-binding region spans residues 2118–2206 (EFFTEVDGVR…ASSSASQLSA (89 aa)). The transcriptional activation stretch occupies residues 2118–2331 (EFFTEVDGVR…PVPPPRKKRV (214 aa)). An interaction with non-structural protein 4A region spans residues 2133–2137 (PPCRP). The interval 2187-2440 (RLARGSPPSL…ALITPCAAEE (254 aa)) is interaction with host SKP2. 6 positions are modified to phosphoserine; by host: S2192, S2195, S2199, S2202, S2205, and S2208. Residues 2208–2247 (SLKATCTTAGKHPDAELIEANLLWRQEVGGNITRVESENK) form an ISDR region. Positions 2208–2273 (SLKATCTTAG…REISVGAECF (66 aa)) are interaction with EIF2AK2/PKR. Residues 2247-2305 (KIIVLDSFDPLIAETDDREISVGAECFNPPRPKFPPALPVWARPDYNPPLLQPWKAPDY) are NS4B-binding. The tract at residues 2298–2376 (QPWKAPDYEP…STLSSDMTPP (79 aa)) is V3. The tract at residues 2316-2411 (PPKGLPPVPP…PDLSSGSWST (96 aa)) is disordered. Residues 2321 to 2324 (PPVP) carry the SH3-binding motif. Residues 2326–2334 (PRKKRVVQL) carry the Nuclear localization signal motif. Polar residues predominate over residues 2347–2373 (AQTSFPPSTATLSEDSGRETSTLSSDM). Basic and acidic residues predominate over residues 2375–2385 (PPREEADRASD). A Phosphoserine; by host modification is found at S2464. The region spanning 2636 to 2754 (PMGFSYDTRC…ISESMGVAED (119 aa)) is the RdRp catalytic domain. Mg(2+)-binding residues include D2642, D2740, and D2741. The chain crosses the membrane as a helical span at residues 2993 to 3013 (NLLLCLLLLTVGVGIFLLPAR).

This sequence belongs to the hepacivirus polyprotein family. In terms of assembly, homooligomer. Interacts with E1 (via C-terminus). Interacts with the non-structural protein 5A. Interacts (via N-terminus) with host STAT1 (via SH2 domain); this interaction results in decreased STAT1 phosphorylation and ubiquitin-mediated proteasome-dependent STAT1 degradation, leading to decreased IFN-stimulated gene transcription. Interacts with host STAT3; this interaction constitutively activates STAT3. Interacts with host LTBR receptor. Interacts with host TNFRSF1A receptor and possibly induces apoptosis. Interacts with host HNRPK. Interacts with host YWHAE. Interacts with host UBE3A/E6AP. Interacts with host DDX3X. Interacts with host APOA2. Interacts with host RXRA protein. Interacts with host SP110 isoform 3/Sp110b; this interaction sequesters the transcriptional corepressor SP110 away from the nucleus. Interacts with host CREB3 nuclear transcription protein; this interaction triggers cell transformation. Interacts with host ACY3. Interacts with host C1QR1. Interacts with host RBM24; this interaction, which enhances the interaction of the mature core protein with 5'-UTR, may inhibit viral translation and favor replication. Interacts with host EIF2AK2/PKR; this interaction induces the autophosphorylation of EIF2AK2. Part of the viral assembly initiation complex composed of NS2, E1, E2, NS3, NS4A, NS5A and the mature core protein. As to quaternary structure, forms a heterodimer with envelope glycoprotein E2. Interacts with mature core protein. Interacts with protease NS2. The heterodimer E1/E2 interacts with host CLDN1; this interaction plays a role in viral entry into host cell. Interacts with host SPSB2 (via C-terminus). Part of the viral assembly initiation complex composed of NS2, E1, E2, NS3, NS4A, NS5A and the mature core protein. Interacts with host NEURL3; this interaction prevents E1 binding to glycoprotein E2. Forms a heterodimer with envelope glycoprotein E1. Interacts with host CD81 and SCARB1 receptors; these interactions play a role in viral entry into host cell. Interacts with host EIF2AK2/PKR; this interaction inhibits EIF2AK2 and probably allows the virus to evade the innate immune response. Interacts with host CD209/DC-SIGN and CLEC4M/DC-SIGNR. Interact with host SPCS1; this interaction is essential for viral particle assembly. Interacts with protease NS2. The heterodimer E1/E2 interacts with host CLDN1; this interaction plays a role in viral entry into host cell. Part of the viral assembly initiation complex composed of NS2, E1, E2, NS3, NS4A, NS5A and the mature core protein. Interacts with host SLC3A2/4F2hc; the interaction may facilitate viral entry into host cell. Interacts with human PLSCR1. In terms of assembly, homohexamer. Homoheptamer. Interacts with protease NS2. As to quaternary structure, homodimer. Interacts with host SPCS1; this interaction is essential for viral particle assembly. Interacts with envelope glycoprotein E1. Interacts with envelope glycoprotein E2. Interacts with viroporin p7. Interacts with serine protease/helicase NS3. Part of the replication complex composed of NS2, NS3, NS4A, NS4B, NS5A and the RNA-directed RNA polymerase embedded in an ER-derived membranous web. Part of the viral assembly initiation complex composed of NS2, E1, E2, NS3, NS4A, NS5A and the mature core protein. Interacts with protease NS2. Interacts with non-structural protein 4A; this interaction stabilizes the folding of NS3 serine protease. NS3-NS4A interaction is essential for NS3 activation and allows membrane anchorage of the latter. NS3/NS4A complex also prevents phosphorylation of host IRF3, thus preventing the establishment of dsRNA induced antiviral state. Interacts with host MAVS; this interaction leads to the cleavage and inhibition of host MAVS. Interacts with host TICAM1; this interaction leads to the cleavage and inhibition of host TICAM1. Interacts with host TANK-binding kinase/TBK1; this interaction results in the inhibition of the association between TBK1 and IRF3, which leads to the inhibition of IRF3 activation. Interacts with host RBM24. Part of the replication complex composed of NS2, NS3, NS4A, NS4B, NS5A and the RNA-directed RNA polymerase embedded in an ER-derived membranous web. Part of the viral assembly initiation complex composed of NS2, E1, E2, NS3, NS4A, NS5A and the mature core protein. In terms of assembly, interacts with NS3 serine protease; this interaction stabilizes the folding of NS3 serine protease. NS3-NS4A interaction is essential for NS3 activation and allows membrane anchorage of the latter. Interacts with non-structural protein 5A (via N-terminus). Part of the replication complex composed of NS2, NS3, NS4A, NS4B, NS5A and the RNA-directed RNA polymerase embedded in an ER-derived membranous web. Part of the viral assembly initiation complex composed of NS2, E1, E2, NS3, NS4A, NS5A and the mature core protein. As to quaternary structure, homomultimer. Interacts with non-structural protein NS5A. Interacts with host PLA2G4C; this interaction likely initiates the recruitment of replication complexes to lipid droplets. Interacts with host STING; this interaction disrupts the interaction between STING and TBK1 thereby suppressing the interferon signaling. Part of the replication complex composed of NS2, NS3, NS4A, NS4B, NS5A and the RNA-directed RNA polymerase embedded in an ER-derived membranous web. Monomer. Homodimer; dimerization is required for RNA-binding. Interacts with the mature core protein. Interacts (via N-terminus) with non-structural protein 4A. Interacts with non-structural protein 4B. Interacts (via region D2) with RNA-directed RNA polymerase. Part of the viral assembly initiation complex composed of NS2, E1, E2, NS3, NS4A, NS5A and the mature core protein. Part of the replication complex composed of NS2, NS3, NS4A, NS4B, NS5A and the RNA-directed RNA polymerase embedded in an ER-derived membranous web. Interacts with host GRB2. Interacts with host BIN1. Interacts with host PIK3R1. Interacts with host SRCAP. Interacts with host FKBP8. Interacts (via C-terminus) with host VAPB (via MSP domain). Interacts with host EIF2AK2/PKR; this interaction leads to disruption of EIF2AK2 dimerization by NS5A and probably allows the virus to evade the innate immune response. Interacts (via N-terminus) with host PACSIN2 (via N-terminus); this interaction attenuates protein kinase C alpha-mediated phosphorylation of PACSIN2 by disrupting the interaction between PACSIN2 and PRKCA. Interacts (via N-terminus) with host SRC kinase (via SH2 domain). Interacts with most Src-family kinases. Interacts with host IFI27 and SKP2; promotes the ubiquitin-mediated proteasomal degradation of NS5A. Interacts with host GPS2. Interacts with host TNFRSF21; this interaction allows the modulation by the virus of JNK, p38 MAPK, STAT3, and Akt signaling pathways in a DR6-dependent manner. Interacts (via N-terminus) with host CIDEB (via N-terminus); this interaction seems to regulate the association of HCV particles with APOE. Interacts with host CHKA/Choline Kinase-alpha; CHKA bridges host PI4KA and NS5A and potentiates NS5A-stimulated PI4KA activity, which then facilitates the targeting of the ternary complex to the ER for viral replication. Interacts with host SPSB2 (via C-terminus); this interaction targets NS5A for ubiquitination and degradation. Interacts with host RAB18; this interaction may promote the association of NS5A and other replicase components with lipid droplets. Interacts (via region D2) with host PPIA/CYPA; the interaction stimulates RNA-binding ability of NS5A and is dependent on the peptidyl-prolyl cis-trans isomerase activity of PPIA/CYPA. Interacts with host TRIM14; this interaction induces the degradation of NS5A. In terms of assembly, homooligomer. Interacts with non-structural protein 5A. Interacts with host VAPB. Interacts with host PRK2/PKN2. Interacts with host HNRNPA1 and SEPT6; these interactions facilitate viral replication. Part of the replication complex composed of NS2, NS3, NS4A, NS4B, NS5A and the RNA-directed RNA polymerase. The cofactor is Zn(2+). Mg(2+) serves as cofactor. Post-translationally, specific enzymatic cleavages in vivo yield mature proteins. The structural proteins, core, E1, E2 and p7 are produced by proteolytic processing by host signal peptidases. The core protein precursor is synthesized as a 23 kDa, which is retained in the ER membrane through the hydrophobic signal peptide. Cleavage by the signal peptidase releases the 21 kDa mature core protein. The cleavage of the core protein precursor occurs between aminoacids 176 and 188 but the exact cleavage site is not known. Some degraded forms of the core protein appear as well during the course of infection. The other proteins (p7, NS2, NS3, NS4A, NS4B, NS5A and NS5B) are cleaved by the viral proteases. Autoprocessing between NS2 and NS3 is mediated by the NS2 cysteine protease catalytic domain and regulated by the NS3 N-terminal domain. In terms of processing, phosphorylated by host PKC and PKA. Ubiquitinated; mediated by UBE3A and leading to core protein subsequent proteasomal degradation. Post-translationally, highly N-glycosylated. In terms of processing, palmitoylation is required for NS2/3 autoprocessing and E2 recruitment to membranes. Palmitoylated. This modification may play a role in its polymerization or in protein-protein interactions. Post-translationally, phosphorylated on serines in a basal form termed p56. p58 is a hyperphosphorylated form of p56. p56 and p58 coexist in the cell in roughly equivalent amounts. Hyperphosphorylation is dependent on the presence of NS4A. Host CSNK1A1/CKI-alpha or RPS6KB1 kinases may be responsible for NS5A phosphorylation. In terms of processing, tyrosine phosphorylation is essential for the interaction with host SRC. The N-terminus is phosphorylated by host PRK2/PKN2.

Its subcellular location is the host endoplasmic reticulum membrane. It is found in the host mitochondrion membrane. It localises to the virion. The protein localises to the host cytoplasm. The protein resides in the host nucleus. Its subcellular location is the host lipid droplet. It is found in the virion membrane. It localises to the host mitochondrion. The protein localises to the host cell membrane. The protein resides in the host perinuclear region. The catalysed reaction is Hydrolysis of four peptide bonds in the viral precursor polyprotein, commonly with Asp or Glu in the P6 position, Cys or Thr in P1 and Ser or Ala in P1'.. It catalyses the reaction a ribonucleoside 5'-triphosphate + H2O = a ribonucleoside 5'-diphosphate + phosphate + H(+). The enzyme catalyses ATP + H2O = ADP + phosphate + H(+). It carries out the reaction RNA(n) + a ribonucleoside 5'-triphosphate = RNA(n+1) + diphosphate. With respect to regulation, inhibited by the antiviral drug hexamethylene amiloride. Inhibition by amantadine appears to be genotype-dependent. Also inhibited by long-alkyl-chain iminosugar derivatives. Activity is up-regulated by PRK2/PKN2-mediated phosphorylation. Functionally, packages viral RNA to form a viral nucleocapsid, and promotes virion budding. Participates in the viral particle production as a result of its interaction with the non-structural protein 5A. Binds RNA and may function as a RNA chaperone to induce the RNA structural rearrangements taking place during virus replication. Modulates viral translation initiation by interacting with viral IRES and 40S ribosomal subunit. Affects various cell signaling pathways, host immunity and lipid metabolism. Prevents the establishment of cellular antiviral state by blocking the interferon-alpha/beta (IFN-alpha/beta) and IFN-gamma signaling pathways and by blocking the formation of phosphorylated STAT1 and promoting ubiquitin-mediated proteasome-dependent degradation of STAT1. Activates STAT3 leading to cellular transformation. Regulates the activity of cellular genes, including c-myc and c-fos. May repress the promoter of p53, and sequester CREB3 and SP110 isoform 3/Sp110b in the cytoplasm. Represses cell cycle negative regulating factor CDKN1A, thereby interrupting an important check point of normal cell cycle regulation. Targets transcription factors involved in the regulation of inflammatory responses and in the immune response: suppresses TNF-induced NF-kappa-B activation, and activates AP-1. Binds to dendritic cells (DCs) via C1QR1, resulting in down-regulation of T-lymphocytes proliferation. Alters lipid metabolism by interacting with hepatocellular proteins involved in lipid accumulation and storage. Induces up-regulation of FAS promoter activity, and thereby contributes to the increased triglyceride accumulation in hepatocytes (steatosis). Forms a heterodimer with envelope glycoprotein E2, which mediates virus attachment to the host cell, virion internalization through clathrin-dependent endocytosis and fusion with host membrane. Fusion with the host cell is most likely mediated by both E1 and E2, through conformational rearrangements of the heterodimer required for fusion rather than a classical class II fusion mechanism. E1/E2 heterodimer binds host apolipoproteins such as APOB and ApoE thereby forming a lipo-viro-particle (LVP). APOE associated to the LVP allows the initial virus attachment to cell surface receptors such as the heparan sulfate proteoglycans (HSPGs), syndecan-1 (SDC1), syndecan-1 (SDC2), the low-density lipoprotein receptor (LDLR) and scavenger receptor class B type I (SCARB1). The cholesterol transfer activity of SCARB1 allows E2 exposure and binding of E2 to SCARB1 and the tetraspanin CD81. E1/E2 heterodimer binding on CD81 activates the epithelial growth factor receptor (EGFR) signaling pathway. Diffusion of the complex E1-E2-EGFR-SCARB1-CD81 to the cell lateral membrane allows further interaction with Claudin 1 (CLDN1) and occludin (OCLN) to finally trigger HCV entry. In terms of biological role, forms a heterodimer with envelope glycoprotein E1, which mediates virus attachment to the host cell, virion internalization through clathrin-dependent endocytosis and fusion with host membrane. Fusion with the host cell is most likely mediated by both E1 and E2, through conformational rearrangements of the heterodimer required for fusion rather than a classical class II fusion mechanism. The interaction between envelope glycoprotein E2 and host apolipoprotein E/APOE allows the proper assembly, maturation and infectivity of the viral particles. This interaction is probably promoted via the up-regulation of cellular autophagy by the virus. E1/E2 heterodimer binds host apolipoproteins such as APOB and APOE thereby forming a lipo-viro-particle (LVP). APOE associated to the LVP allows the initial virus attachment to cell surface receptors such as the heparan sulfate proteoglycans (HSPGs), syndecan-1 (SDC1), syndecan-1 (SDC2), the low-density lipoprotein receptor (LDLR) and scavenger receptor class B type I (SCARB1). The cholesterol transfer activity of SCARB1 allows E2 exposure and binding of E2 to SCARB1 and the tetraspanin CD81. E1/E2 heterodimer binding on CD81 activates the epithelial growth factor receptor (EGFR) signaling pathway. Diffusion of the complex E1-E2-EGFR-SCARB1-CD81 to the cell lateral membrane allows further interaction with Claudin 1 (CLDN1) and occludin (OCLN) to finally trigger HCV entry. Inhibits host EIF2AK2/PKR activation, preventing the establishment of an antiviral state. Viral ligand for CD209/DC-SIGN and CLEC4M/DC-SIGNR, which are respectively found on dendritic cells (DCs), and on liver sinusoidal endothelial cells and macrophage-like cells of lymph node sinuses. These interactions allow the capture of circulating HCV particles by these cells and subsequent facilitated transmission to permissive cells such as hepatocytes and lymphocyte subpopulations. The interaction between E2 and host amino acid transporter complex formed by SLC3A2 and SLC7A5/LAT1 may facilitate viral entry into host cell. Its function is as follows. Ion channel protein that acts as a viroporin and plays an essential role in the assembly, envelopment and secretion of viral particles. Regulates the host cell secretory pathway, which induces the intracellular retention of viral glycoproteins and favors assembly of viral particles. Creates a pore in acidic organelles and releases Ca(2+) and H(+) in the cytoplasm of infected cells, leading to a productive viral infection. High levels of cytoplasmic Ca(2+) may trigger membrane trafficking and transport of viral ER-associated proteins to viroplasms, sites of viral genome replication. This ionic imbalance induces the assembly of the inflammasome complex, which triggers the maturation of pro-IL-1beta into IL-1beta through the action of caspase-1. Targets also host mitochondria and induces mitochondrial depolarization. In addition of its role as a viroporin, acts as a lipid raft adhesion factor. Functionally, cysteine protease required for the proteolytic auto-cleavage between the non-structural proteins NS2 and NS3. The N-terminus of NS3 is required for the function of NS2 protease (active region NS2-3). Promotes the initiation of viral particle assembly by mediating the interaction between structural and non-structural proteins. Displays three enzymatic activities: serine protease with a chymotrypsin-like fold, NTPase and RNA helicase. NS3 serine protease, in association with NS4A, is responsible for the cleavages of NS3-NS4A, NS4A-NS4B, NS4B-NS5A and NS5A-NS5B. The NS3/NS4A complex prevents phosphorylation of host IRF3, thus preventing the establishment of dsRNA induced antiviral state. The NS3/NS4A complex induces host amino acid transporter component SLC3A2, thus contributing to HCV propagation. NS3 RNA helicase binds to RNA and unwinds both dsDNA and dsRNA in the 3' to 5' direction, and likely resolves RNA complicated stable secondary structures in the template strand. Binds a single ATP and catalyzes the unzipping of a single base pair of dsRNA. Inhibits host antiviral proteins TBK1 and IRF3 thereby preventing the establishment of an antiviral state. Cleaves host MAVS/CARDIF thereby preventing the establishment of an antiviral state. Cleaves host TICAM1/TRIF, thereby disrupting TLR3 signaling and preventing the establishment of an antiviral state. In terms of biological role, peptide cofactor which forms a non-covalent complex with the N-terminal of NS3 serine protease. The NS3/NS4A complex prevents phosphorylation of host IRF3, thus preventing the establishment of dsRNA induced antiviral state. The NS3/NS4A complex induces host amino acid transporter component SLC3A2, thus contributing to HCV propagation. Its function is as follows. Induces a specific membrane alteration that serves as a scaffold for the virus replication complex. This membrane alteration gives rise to the so-called ER-derived membranous web that contains the replication complex. NS4B self-interaction contributes to its function in membranous web formation. Promotes host TRIF protein degradation in a CASP8-dependent manner thereby inhibiting host TLR3-mediated interferon signaling. Disrupts the interaction between STING and TBK1 contributing to the inhibition of interferon signaling. Functionally, phosphorylated protein that is indispensable for viral replication and assembly. Both hypo- and hyperphosphorylated states are required for the viral life cycle. The hyperphosphorylated form of NS5A is an inhibitor of viral replication. Involved in RNA-binding and especially in binding to the viral genome. Zinc is essential for RNA-binding. Participates in the viral particle production as a result of its interaction with the mature viral core protein. Its interaction with host VAPB may target the viral replication complex to vesicles. Down-regulates viral IRES translation initiation. Mediates interferon resistance, presumably by interacting with and inhibiting host EIF2AK2/PKR. Prevents BIN1-induced apoptosis. Acts as a transcriptional activator of some host genes important for viral replication when localized in the nucleus. Via the interaction with host PACSIN2, modulates lipid droplet formation in order to promote virion assembly. Modulates TNFRSF21/DR6 signaling pathway for viral propagation. RNA-dependent RNA polymerase that performs primer-template recognition and RNA synthesis during viral replication. Initiates RNA transcription/replication at a flavin adenine dinucleotide (FAD), resulting in a 5'- FAD cap on viral RNAs. In this way, recognition of viral 5' RNA by host pattern recognition receptors can be bypassed, thereby evading activation of antiviral pathways. The polypeptide is Genome polyprotein (Hepatitis C virus genotype 6d (isolate VN235) (HCV)).